Reading from the N-terminus, the 751-residue chain is Dachshund homolog 1 (751 aa).

The tract at residues 1–178 is disordered; the sequence is MAVPAALIPP…PSPVENTPQN (178 aa). 2 stretches are compositionally biased toward low complexity: residues 20-53 and 61-74; these read ISTSASSSGTTTSTSSATSSPAPSIGPPASSGPT and ASSASSSAAATVTS. Composition is skewed to gly residues over residues 75-97 and 107-119; these read PGGGGGGSGGGGGSGGNGGGGGS and SSGGGVSAGGGGA. Positions 120–156 are enriched in low complexity; that stretch reads SSTPITASTGSSSSSSSSSSSSSSSSSSSSSSSSSSS. Over residues 167-178 the composition is skewed to polar residues; it reads STPSPVENTPQN. The DACHbox-N stretch occupies residues 182 to 268; that stretch reads KMVDLRGAKV…LISRKDFETL (87 aa). Residues 182-377 form an interaction with SIX6 and HDAC3 region; the sequence is KMVDLRGAKV…VGSSGGSWDK (196 aa). Disordered regions lie at residues 273-295, 351-393, 467-525, and 537-556; these read TNASSRPGRPPKRTQSVTSPENS, SNNQ…APVA, SPPS…RIPV, and MGLSPNVLPGPKEGDLAGHD. 2 stretches are compositionally biased toward polar residues: residues 285–294 and 351–369; these read RTQSVTSPEN and SNNQHGADSENGDMNSSVG. The residue at position 484 (Ser-484) is a Phosphoserine. The segment covering 499 to 517 has biased composition (low complexity); the sequence is SHPSSHRSSSVSSSPARTE. The interval 609–689 is DACHbox-C; sequence SSIETLLTNI…KAKRKLQEAL (81 aa). Residues 620–699 are interaction with SIN3A; it reads GLLKVAIDNA…EFETKRREQA (80 aa). A coiled-coil region spans residues 623-711; sequence KVAIDNARAQ…TLKQAASADS (89 aa).

It belongs to the DACH/dachshund family. Interacts with SIX1, SIX6 and EYA3. Interacts with NCOR1 and HDAC3 through its N-terminus. Interacts with SIN3A through its C-terminus. Interacts with SMAD3 and SMAD4. Expressed at higher levels in adult kidney and lung, and at lower levels in brain and testis. Expressed in embryonal kidneys, eyes, cochleae and limb buds.

Its subcellular location is the nucleus. Functionally, transcription factor that is involved in regulation of organogenesis. Seems to be a regulator of SIX1, SIX6 and probably SIX5. Corepression of precursor cell proliferation in myoblasts by SIX1 is switched to coactivation through recruitment of EYA3 to the SIX1-DACH1 complex. Transcriptional activation also seems to involve association of CREBBP. Seems to act as a corepressor of SIX6 in regulating proliferation by directly repressing cyclin-dependent kinase inhibitors, including the p27Kip1 promoter. Inhibits TGF-beta signaling through interaction with SMAD4 and NCOR1. Binds to chromatin DNA via its DACHbox-N domain. The protein is Dachshund homolog 1 (Dach1) of Mus musculus (Mouse).